The sequence spans 308 residues: Ribosomal RNA large subunit methyltransferase F (308 aa).

Belongs to the methyltransferase superfamily. METTL16/RlmF family.

The protein localises to the cytoplasm. It carries out the reaction adenosine(1618) in 23S rRNA + S-adenosyl-L-methionine = N(6)-methyladenosine(1618) in 23S rRNA + S-adenosyl-L-homocysteine + H(+). Functionally, specifically methylates the adenine in position 1618 of 23S rRNA. The polypeptide is Ribosomal RNA large subunit methyltransferase F (Salmonella paratyphi A (strain ATCC 9150 / SARB42)).